The sequence spans 500 residues: MKRSLWVMQVLHWAVMLALVQCGALGARRFRGGRNPQPRRALPSAHYRDRGETTESFSLDFTAVEENMDNFMTQVKNLAQSLYPCSAQKLDYDMKLHFLENTSVTCNDGTPAGYYLKESKGSKRWLIFLEGGWYCFNKENCDSRYETMRRLMSSSKWPQTKTGTGMLSSLPEENPHWWNANMVFIPYCSSDVWSGASPKTDQNDYAFMGSLIIKEVVKDLLSKGLDNAKILLLAGSSAGGTGVLLNVDSVSELLEELGHTNIQVRGLSDSGWFLDNKQYRCTDCVDTINCAPTEVIKRGIKYWGGVVPERCRQAYEGKEWNCFFGYKVYPTIKRPVFIVQWLFDEAQLTVDNIHLTGQPVQEGQWRYIQNLGTELRNTLKDVPAMFAPACLSHEFITRNYWTDVQVKGTSLPRALHCWDRSLQDTSRNNKSPPKGCPVHLIDSCPWPHCNPTCPTIRDQSTGQEMNVIQFLMHMGFDVQKMAHQQGMDPSKLLGMLSSGS.

The first 26 residues, 1–26 (MKRSLWVMQVLHWAVMLALVQCGALG), serve as a signal peptide directing secretion. The N-linked (GlcNAc...) asparagine glycan is linked to Asn101. Active-site charge relay system residues include Ser237, Asp344, and His393.

It belongs to the pectinacetylesterase family. Notum subfamily.

The protein resides in the secreted. The enzyme catalyses [Wnt protein]-O-(9Z)-hexadecenoyl-L-serine + H2O = [Wnt protein]-L-serine + (9Z)-hexadecenoate + H(+). Carboxylesterase that acts as a key negative regulator of the Wnt signaling pathway. Acts by specifically mediating depalmitoleoylation of WNT proteins. Serine palmitoleoylation of WNT proteins is required for efficient binding to frizzled receptors. This Danio rerio (Zebrafish) protein is Palmitoleoyl-protein carboxylesterase notum1a.